We begin with the raw amino-acid sequence, 461 residues long: 3-oxoacyl-[acyl-carrier-protein] synthase, mitochondrial (461 aa).

A mitochondrion-targeting transit peptide spans 1 to 28 (MATSNLRRHLSASRLRLNRFISTSSSYH). Residues 30 to 460 (HRRVVVTGLG…GTNASLLFAS (431 aa)) form the Ketosynthase family 3 (KS3) domain. Catalysis depends on for beta-ketoacyl synthase activity residues Cys209, His350, and His389.

The protein belongs to the thiolase-like superfamily. Beta-ketoacyl-ACP synthases family. Homodimer. As to expression, expressed at the same level in leaves, roots, siliques and flowers.

The protein resides in the mitochondrion. It carries out the reaction a fatty acyl-[ACP] + malonyl-[ACP] + H(+) = a 3-oxoacyl-[ACP] + holo-[ACP] + CO2. The catalysed reaction is butanoyl-[ACP] + malonyl-[ACP] + H(+) = 3-oxohexanoyl-[ACP] + holo-[ACP] + CO2. It catalyses the reaction hexanoyl-[ACP] + malonyl-[ACP] + H(+) = 3-oxooctanoyl-[ACP] + holo-[ACP] + CO2. The enzyme catalyses octanoyl-[ACP] + malonyl-[ACP] + H(+) = 3-oxodecanoyl-[ACP] + holo-[ACP] + CO2. It carries out the reaction decanoyl-[ACP] + malonyl-[ACP] + H(+) = 3-oxododecanoyl-[ACP] + holo-[ACP] + CO2. The catalysed reaction is dodecanoyl-[ACP] + malonyl-[ACP] + H(+) = 3-oxotetradecanoyl-[ACP] + holo-[ACP] + CO2. It catalyses the reaction tetradecanoyl-[ACP] + malonyl-[ACP] + H(+) = 3-oxohexadecanoyl-[ACP] + holo-[ACP] + CO2. The enzyme catalyses hexadecanoyl-[ACP] + malonyl-[ACP] + H(+) = 3-oxooctadecanoyl-[ACP] + holo-[ACP] + CO2. The protein operates within lipid metabolism; fatty acid biosynthesis. Its activity is regulated as follows. Inhibited by cerulenin. In terms of biological role, catalyzes all the condensation reaction of fatty acid synthesis by the addition to an acyl acceptor of two carbons from malonyl-ACP. Able to elongate saturated acyl chains from 4 to at least 16 carbons. Uses malonyl-CoA but not acetyl-CoA as primer substrate. When expressed in a heterologous system, reveals a bimodal distribution of products, with peaks at C8 and C14-C16. The major product of the reaction (octanoyl-ACP) is required for the lipoylation of essential mitochondrial proteins. Required for mitochondrial fatty acid synthesis (mtFAS). MtFAS are essential for photorespiration and plant development, probably by influencing mitochondrial membrane lipid composition and other lipid metabolic pathways. This is 3-oxoacyl-[acyl-carrier-protein] synthase, mitochondrial from Arabidopsis thaliana (Mouse-ear cress).